The primary structure comprises 300 residues: 4-hydroxy-tetrahydrodipicolinate synthase (300 aa).

Residue Thr-55 participates in pyruvate binding. The active-site Proton donor/acceptor is the Tyr-143. The Schiff-base intermediate with substrate role is filled by Lys-171. Residue Ile-211 participates in pyruvate binding.

Belongs to the DapA family. Homotetramer; dimer of dimers.

The protein resides in the cytoplasm. It carries out the reaction L-aspartate 4-semialdehyde + pyruvate = (2S,4S)-4-hydroxy-2,3,4,5-tetrahydrodipicolinate + H2O + H(+). It participates in amino-acid biosynthesis; L-lysine biosynthesis via DAP pathway; (S)-tetrahydrodipicolinate from L-aspartate: step 3/4. Catalyzes the condensation of (S)-aspartate-beta-semialdehyde [(S)-ASA] and pyruvate to 4-hydroxy-tetrahydrodipicolinate (HTPA). The polypeptide is 4-hydroxy-tetrahydrodipicolinate synthase (Mycobacterium leprae (strain Br4923)).